Reading from the N-terminus, the 157-residue chain is MNKIPMTVAGQIALDEELKRLKTIERPAVIAAISEAREHGDLSENAEYHAAKERQGWIEGRVQELEDKLARAQVIDITKMSGDTVKFGATVTVLDEDTEQESTYQIVGEDESDVKSGKISISSPIARSMINKEVGDVAEVNAPGGLKSYEIMSVSWG.

The protein belongs to the GreA/GreB family.

In terms of biological role, necessary for efficient RNA polymerase transcription elongation past template-encoded arresting sites. The arresting sites in DNA have the property of trapping a certain fraction of elongating RNA polymerases that pass through, resulting in locked ternary complexes. Cleavage of the nascent transcript by cleavage factors such as GreA or GreB allows the resumption of elongation from the new 3'terminus. GreA releases sequences of 2 to 3 nucleotides. This Maricaulis maris (strain MCS10) (Caulobacter maris) protein is Transcription elongation factor GreA.